Reading from the N-terminus, the 44-residue chain is Cytochrome b559 subunit beta (44 aa).

The helical transmembrane segment at 19–35 threads the bilayer; the sequence is WLAVHTLGVPTVFFLGA. Histidine 23 provides a ligand contact to heme.

It belongs to the PsbE/PsbF family. Heterodimer of an alpha subunit and a beta subunit. PSII is composed of 1 copy each of membrane proteins PsbA, PsbB, PsbC, PsbD, PsbE, PsbF, PsbH, PsbI, PsbJ, PsbK, PsbL, PsbM, PsbT, PsbX, PsbY, PsbZ, Psb30/Ycf12, peripheral proteins PsbO, CyanoQ (PsbQ), PsbU, PsbV and a large number of cofactors. It forms dimeric complexes. The cofactor is heme b.

The protein resides in the cellular thylakoid membrane. This b-type cytochrome is tightly associated with the reaction center of photosystem II (PSII). PSII is a light-driven water:plastoquinone oxidoreductase that uses light energy to abstract electrons from H(2)O, generating O(2) and a proton gradient subsequently used for ATP formation. It consists of a core antenna complex that captures photons, and an electron transfer chain that converts photonic excitation into a charge separation. The chain is Cytochrome b559 subunit beta from Trichodesmium erythraeum (strain IMS101).